Reading from the N-terminus, the 114-residue chain is MEKAQIYGKLVDKESRCEHWHGPLDVIALRFKCCNGYYACYECHQELVPHVTERYNINDETVPLVICGVCKLEMSFAAYSDSLQCPNCRSQFNPGCKLHYDMYFMKDDEPENLR.

A CHY-type; degenerate zinc finger spans residues 10 to 90; the sequence is LVDKESRCEH…DSLQCPNCRS (81 aa). Positions 17, 19, 40, 43, 67, 70, 85, and 88 each coordinate Zn(2+).

As to quaternary structure, interacts with the small Tim proteins.

Its subcellular location is the mitochondrion intermembrane space. It is found in the mitochondrion membrane. In terms of biological role, required for the assembly or recycling of the small Tim proteins in the mitochondrial intermembrane, thereby participating in the import and insertion of multi-pass transmembrane proteins into the mitochondrial inner membrane. This is Helper of Tim protein 13 (HOT13) from Kluyveromyces lactis (strain ATCC 8585 / CBS 2359 / DSM 70799 / NBRC 1267 / NRRL Y-1140 / WM37) (Yeast).